Here is an 855-residue protein sequence, read N- to C-terminus: Envelope glycoprotein gp150 (855 aa).

Residues 1–784 lie on the Extracellular side of the membrane; it reads MAEGGFTHNQ…WIGKIPQYLK (784 aa). Residues asparagine 135, asparagine 220, asparagine 258, asparagine 269, asparagine 274, asparagine 298, asparagine 330, asparagine 336, asparagine 342, asparagine 372, asparagine 418, asparagine 422, asparagine 448, asparagine 469, asparagine 481, asparagine 499, asparagine 518, asparagine 531, asparagine 548, and asparagine 551 are each glycosylated (N-linked (GlcNAc...) asparagine; by host). The interval 615 to 635 is fusion peptide; sequence IMLALATVLSMAGAGTGATAI. A coiled-coil region spans residues 642-692; the sequence is HQVLATHQQALEKITEALKINNLRLITLEHQVLVIGLRVEAIEKFLYTAFA. The segment at 661-679 is immunosuppression; that stretch reads INNLRLITLEHQVLVIGLR. N-linked (GlcNAc...) asparagine; by host glycosylation is found at asparagine 716, asparagine 720, asparagine 728, and asparagine 736. Residues 735-771 are a coiled coil; that stretch reads YNQTRDLQNKFYEIIMDIEQNNVQGKTGIQQLQKWEN. A helical membrane pass occupies residues 785–805; sequence GLLGSVLGIGLGILLLLICLP. Residues 806–855 lie on the Cytoplasmic side of the membrane; sequence TLVDCIRNCTNKILGYTVIAMPEIDDEEVHLSVELRRNGRQCGISEKEEE.

The mature envelope protein (Env) consists of a trimer of SU-TM heterodimers attached by noncovalent interactions or by a labile interchain disulfide bond. In terms of processing, specific enzymatic cleavages in vivo yield mature proteins. Envelope glycoproteins are synthesized as an inactive precursor that is N-glycosylated and processed likely by host cell furin or by a furin-like protease in the Golgi to yield the mature SU and TM proteins. The cleavage site between SU and TM requires the minimal sequence [KR]-X-[KR]-R.

The protein localises to the virion membrane. It is found in the host cell membrane. Functionally, the surface protein (SU) attaches the virus to the host cell by binding to its receptor. This interaction triggers the refolding of the transmembrane protein (TM) and is thought to activate its fusogenic potential by unmasking its fusion peptide. Fusion occurs at the host cell plasma membrane. The transmembrane protein (TM) acts as a class I viral fusion protein. Under the current model, the protein has at least 3 conformational states: pre-fusion native state, pre-hairpin intermediate state, and post-fusion hairpin state. During viral and target cell membrane fusion, the coiled coil regions (heptad repeats) assume a trimer-of-hairpins structure, positioning the fusion peptide in close proximity to the C-terminal region of the ectodomain. The formation of this structure appears to drive apposition and subsequent fusion of viral and target cell membranes. Membranes fusion leads to delivery of the nucleocapsid into the cytoplasm. The polypeptide is Envelope glycoprotein gp150 (env) (Feline immunodeficiency virus (isolate TM2) (FIV)).